Reading from the N-terminus, the 316-residue chain is Ribosomal RNA small subunit methyltransferase H (316 aa).

Residues 35–37 (AGH), aspartate 55, phenylalanine 84, aspartate 105, and glutamine 112 each bind S-adenosyl-L-methionine.

It belongs to the methyltransferase superfamily. RsmH family.

The protein resides in the cytoplasm. It carries out the reaction cytidine(1402) in 16S rRNA + S-adenosyl-L-methionine = N(4)-methylcytidine(1402) in 16S rRNA + S-adenosyl-L-homocysteine + H(+). In terms of biological role, specifically methylates the N4 position of cytidine in position 1402 (C1402) of 16S rRNA. The sequence is that of Ribosomal RNA small subunit methyltransferase H from Streptococcus pneumoniae serotype 4 (strain ATCC BAA-334 / TIGR4).